We begin with the raw amino-acid sequence, 152 residues long: Biogenesis of lysosome-related organelles complex 1 subunit 1 (152 aa).

The protein belongs to the BLOC1S1 family. Component of the biogenesis of lysosome-related organelles complex-1 (BLOC-1). Interacts with BLOS2 and SNX1. Expressed in the whole plant (at protein level).

The protein resides in the cytoplasm. The protein localises to the endosome. Its function is as follows. Component of the biogenesis of lysosome-related organelles complex-1 (BLOC-1), a complex that mediates the vacuolar degradative transport via the intracellular vesicle trafficking from the endosome to the vacuole. Probably regulates the PIN1 and PIN2 homeostasis through its interaction with SNX1. The chain is Biogenesis of lysosome-related organelles complex 1 subunit 1 (BLOS1) from Arabidopsis thaliana (Mouse-ear cress).